The primary structure comprises 330 residues: (4-{4-[2-(gamma-L-glutamylamino)ethyl]phenoxymethyl}furan-2-yl)methanamine synthase (330 aa).

Belongs to the MfnF family.

The enzyme catalyses gamma-L-glutamyltyramine + [5-(aminomethyl)furan-3-yl]methyl diphosphate = (4-{4-[2-(gamma-L-glutamylamino)ethyl]phenoxymethyl}furan-2-yl)methanamine + diphosphate. It participates in cofactor biosynthesis; methanofuran biosynthesis. Functionally, catalyzes the condensation between 5-(aminomethyl)-3-furanmethanol diphosphate (F1-PP) and gamma-glutamyltyramine to produce APMF-Glu. The chain is (4-{4-[2-(gamma-L-glutamylamino)ethyl]phenoxymethyl}furan-2-yl)methanamine synthase from Methanocaldococcus jannaschii (strain ATCC 43067 / DSM 2661 / JAL-1 / JCM 10045 / NBRC 100440) (Methanococcus jannaschii).